The sequence spans 103 residues: NADH-quinone oxidoreductase subunit K (103 aa).

The next 3 helical transmembrane spans lie at 7-27 (TEHG…GVLV), 31-51 (LIFM…AFIV), and 65-85 (FMLI…LILL).

Belongs to the complex I subunit 4L family. In terms of assembly, NDH-1 is composed of 14 different subunits. Subunits NuoA, H, J, K, L, M, N constitute the membrane sector of the complex.

Its subcellular location is the cell inner membrane. The catalysed reaction is a quinone + NADH + 5 H(+)(in) = a quinol + NAD(+) + 4 H(+)(out). Functionally, NDH-1 shuttles electrons from NADH, via FMN and iron-sulfur (Fe-S) centers, to quinones in the respiratory chain. The immediate electron acceptor for the enzyme in this species is believed to be ubiquinone. Couples the redox reaction to proton translocation (for every two electrons transferred, four hydrogen ions are translocated across the cytoplasmic membrane), and thus conserves the redox energy in a proton gradient. The polypeptide is NADH-quinone oxidoreductase subunit K (Nitrosococcus oceani (strain ATCC 19707 / BCRC 17464 / JCM 30415 / NCIMB 11848 / C-107)).